The sequence spans 397 residues: Tryptophan synthase beta chain (397 aa).

N6-(pyridoxal phosphate)lysine is present on lysine 89.

The protein belongs to the TrpB family. As to quaternary structure, tetramer of two alpha and two beta chains. Requires pyridoxal 5'-phosphate as cofactor.

It carries out the reaction (1S,2R)-1-C-(indol-3-yl)glycerol 3-phosphate + L-serine = D-glyceraldehyde 3-phosphate + L-tryptophan + H2O. Its pathway is amino-acid biosynthesis; L-tryptophan biosynthesis; L-tryptophan from chorismate: step 5/5. Functionally, the beta subunit is responsible for the synthesis of L-tryptophan from indole and L-serine. The sequence is that of Tryptophan synthase beta chain from Leptospira interrogans serogroup Icterohaemorrhagiae serovar copenhageni (strain Fiocruz L1-130).